A 215-amino-acid chain; its full sequence is Cytochrome b6 (215 aa).

The chain crosses the membrane as a helical span at residues 32–52 (IFYCLGGITLTCFLVQVATGF). Cys35 serves as a coordination point for heme c. Heme b contacts are provided by His86 and His100. 3 helical membrane passes run 90–110 (ASMM…TGGF), 116–136 (LTWV…VTGY), and 186–206 (LHTF…FPMI). Heme b is bound by residues His187 and His202.

The protein belongs to the cytochrome b family. PetB subfamily. As to quaternary structure, the 4 large subunits of the cytochrome b6-f complex are cytochrome b6, subunit IV (17 kDa polypeptide, PetD), cytochrome f and the Rieske protein, while the 4 small subunits are PetG, PetL, PetM and PetN. The complex functions as a dimer. It depends on heme b as a cofactor. Heme c is required as a cofactor.

It is found in the plastid. The protein resides in the chloroplast thylakoid membrane. Component of the cytochrome b6-f complex, which mediates electron transfer between photosystem II (PSII) and photosystem I (PSI), cyclic electron flow around PSI, and state transitions. This chain is Cytochrome b6, found in Cucumis sativus (Cucumber).